The sequence spans 83 residues: Putative beta-neurotoxin RjAa17f (83 aa).

The signal sequence occupies residues 1–18 (MKILIFIIASFMLIGVEC). One can recognise an LCN-type CS-alpha/beta domain in the interval 19 to 82 (KEGYPMGRNG…VWDFSNIKCR (64 aa)). 4 disulfide bridges follow: cysteine 29-cysteine 81, cysteine 33-cysteine 55, cysteine 40-cysteine 62, and cysteine 44-cysteine 64.

Belongs to the long (4 C-C) scorpion toxin superfamily. Sodium channel inhibitor family. Beta subfamily. In terms of tissue distribution, expressed by the venom gland.

It is found in the secreted. Beta toxins bind voltage-independently at site-4 of sodium channels (Nav) and shift the voltage of activation toward more negative potentials thereby affecting sodium channel activation and promoting spontaneous and repetitive firing. The sequence is that of Putative beta-neurotoxin RjAa17f from Rhopalurus junceus (Caribbean blue scorpion).